A 206-amino-acid chain; its full sequence is Outer-membrane lipoprotein carrier protein (206 aa).

Residues 1–23 form the signal peptide; the sequence is MKPLFPMLTAAAIAAGLAAPAQA.

This sequence belongs to the LolA family. In terms of assembly, monomer.

The protein resides in the periplasm. Its function is as follows. Participates in the translocation of lipoproteins from the inner membrane to the outer membrane. Only forms a complex with a lipoprotein if the residue after the N-terminal Cys is not an aspartate (The Asp acts as a targeting signal to indicate that the lipoprotein should stay in the inner membrane). The polypeptide is Outer-membrane lipoprotein carrier protein (Chromobacterium violaceum (strain ATCC 12472 / DSM 30191 / JCM 1249 / CCUG 213 / NBRC 12614 / NCIMB 9131 / NCTC 9757 / MK)).